Here is a 242-residue protein sequence, read N- to C-terminus: ADP-dependent L-serine kinase SerK (242 aa).

Glu30 is a catalytic residue. Residues Ser43, Ile49, Trp51, and Lys52 each coordinate ADP. Val68 contacts O-phospho-L-serine. Positions 69, 70, 71, 72, and 73 each coordinate ADP. Position 69 (Asp69) interacts with Mg(2+). O-phospho-L-serine is bound by residues Gly70, His71, and His72. Trp102, Lys221, Thr223, and His225 together coordinate O-phospho-L-serine.

It belongs to the SerK family. It depends on Mg(2+) as a cofactor.

The catalysed reaction is L-serine + ADP = O-phospho-L-serine + AMP + H(+). It participates in amino-acid biosynthesis; L-cysteine biosynthesis; L-cysteine from L-serine: step 1/2. Its function is as follows. Free serine kinase that uses ADP to phosphorylate L-serine to yield O-phospho-L-serine and AMP. In Thermococcus kodakarensis (strain ATCC BAA-918 / JCM 12380 / KOD1) (Pyrococcus kodakaraensis (strain KOD1)), this protein is ADP-dependent L-serine kinase SerK.